The sequence spans 240 residues: Ribosomal RNA small subunit methyltransferase G (240 aa).

S-adenosyl-L-methionine-binding positions include Gly79, Phe84, 130–131, and Arg149; that span reads AE.

Belongs to the methyltransferase superfamily. RNA methyltransferase RsmG family.

The protein localises to the cytoplasm. Functionally, specifically methylates the N7 position of a guanine in 16S rRNA. In Desulforamulus reducens (strain ATCC BAA-1160 / DSM 100696 / MI-1) (Desulfotomaculum reducens), this protein is Ribosomal RNA small subunit methyltransferase G.